Reading from the N-terminus, the 556-residue chain is CDP-diacylglycerol--glycerol-3-phosphate 3-phosphatidyltransferase, mitochondrial (556 aa).

The N-terminal 28 residues, 1–28, are a transit peptide targeting the mitochondrion; the sequence is MAVAAAAAAGPVFWRRLLGLLPGRPGLA. Ser-49 carries the post-translational modification Phosphoserine. Residue 124–131 coordinates ATP; the sequence is ASLYLGTG. PLD phosphodiesterase domains lie at 215-241 and 460-493; these read TIGLQHIKVYLFDNSVILSGANLSDSY and RGWTFHAKGLWLYLAGSSLPCLTLIGSPNFGYRS. Active-site residues include His-220, Lys-222, and Asp-227.

Belongs to the CDP-alcohol phosphatidyltransferase class-II family.

The protein localises to the mitochondrion. It carries out the reaction a CDP-1,2-diacyl-sn-glycerol + sn-glycerol 3-phosphate = a 1,2-diacyl-sn-glycero-3-phospho-(1'-sn-glycero-3'-phosphate) + CMP + H(+). Its pathway is phospholipid metabolism; phosphatidylglycerol biosynthesis; phosphatidylglycerol from CDP-diacylglycerol: step 1/2. With respect to regulation, activated by calcium and magnesium and inhibited by other bivalent cations. In terms of biological role, functions in the biosynthesis of the anionic phospholipids phosphatidylglycerol and cardiolipin. The chain is CDP-diacylglycerol--glycerol-3-phosphate 3-phosphatidyltransferase, mitochondrial (PGS1) from Pongo abelii (Sumatran orangutan).